Reading from the N-terminus, the 71-residue chain is Small integral membrane protein 31 (71 aa).

A helical transmembrane segment spans residues 8 to 28; it reads LEVAFILLAFFIFSLFTLASI. Residues 48-57 are compositionally biased toward basic residues; it reads RKRKEFKGKK. The disordered stretch occupies residues 48-71; the sequence is RKRKEFKGKKNCSDEEHKIETMQP. Asn58 is a glycosylation site (N-linked (GlcNAc...) asparagine). The segment covering 58–71 has biased composition (basic and acidic residues); that stretch reads NCSDEEHKIETMQP.

The protein resides in the membrane. The chain is Small integral membrane protein 31 from Mus musculus (Mouse).